The chain runs to 816 residues: Phosphatidylinositol 4-kinase beta (816 aa).

Disordered stretches follow at residues 1–29, 99–121, and 250–318; these read MGDM…GGSL, EEED…RRRQ, and RKRE…SFSS. N-acetylglycine is present on Gly-2. The interaction with ACBD3 stretch occupies residues 2–68; sequence GDMVVEPATL…VKLLHGGVAI (67 aa). The span at 10-29 shows a compositional bias: low complexity; the sequence is TLKPTSEPTPSPSGNNGGSL. The 182-residue stretch at 61–242 folds into the PIK helical domain; it reads LLHGGVAISS…GTKLRKLILS (182 aa). The residue at position 258 (Ser-258) is a Phosphoserine. Thr-263 is subject to Phosphothreonine. Phosphoserine occurs at positions 266, 275, 277, 284, and 294. Polar residues-rich tracts occupy residues 278 to 297 and 306 to 318; these read DATA…SNPK and SSST…SFSS. Ser-428 bears the Phosphoserine mark. At Thr-438 the chain carries Phosphothreonine. Phosphoserine is present on Ser-511. 2 positions are modified to phosphothreonine: Thr-517 and Thr-519. Residues 535–801 form the PI3K/PI4K catalytic domain; the sequence is EPWQEKVRRI…MVDGSMRSIT (267 aa). The G-loop stretch occupies residues 541-547; that stretch reads VRRIREG. Positions 668–676 are catalytic loop; that stretch reads QVKDRHNGN. The tract at residues 687–711 is activation loop; the sequence is HIDFGFILSSSPRNLGFETSAFKLT.

Belongs to the PI3/PI4-kinase family. Type III PI4K subfamily. As to quaternary structure, interacts with ARF1 and ARF3 in the Golgi complex, but not with ARF4, ARF5 or ARF6. Interacts with NCS1/FREQ in a calcium-independent manner. Interacts with CALN1/CABP8 and CALN2/CABP7; in a calcium-dependent manner; this interaction competes with NCS1/FREQ binding. Interacts with ACBD3. Interacts with ARMH3, YWHAB, YWHAE, YWHAG, YWHAH, YWHAQ, YWHAZ and SFN. Interacts with GGA2 (via VHS domain); the interaction is important for PI4KB location at the Golgi apparatus membrane. Interacts with ATG9A. Mg(2+) serves as cofactor. It depends on Mn(2+) as a cofactor. In terms of tissue distribution, strongly expressed in brain, kidney, lung, small intestine, uterus and adrenal gland. Weaker expression in liver, heart, skeletal muscle, thymus and testis. Not detected in spleen.

It localises to the golgi apparatus. It is found in the endomembrane system. The protein localises to the mitochondrion outer membrane. The protein resides in the rough endoplasmic reticulum membrane. Its subcellular location is the golgi apparatus membrane. The enzyme catalyses a 1,2-diacyl-sn-glycero-3-phospho-(1D-myo-inositol) + ATP = a 1,2-diacyl-sn-glycero-3-phospho-(1D-myo-inositol 4-phosphate) + ADP + H(+). Inhibited by wortmannin. Increased kinase activity upon interaction with NCS1/FREQ. Phosphorylates phosphatidylinositol (PI) in the first committed step in the production of the second messenger inositol-1,4,5,-trisphosphate (PIP). May regulate Golgi disintegration/reorganization during mitosis, possibly via its phosphorylation. Involved in Golgi-to-plasma membrane trafficking. May play an important role in the inner ear development. This chain is Phosphatidylinositol 4-kinase beta (Pi4kb), found in Rattus norvegicus (Rat).